The primary structure comprises 438 residues: Shikimate transporter (438 aa).

A run of 12 helical transmembrane segments spans residues 28–48 (FAGA…AALV), 64–84 (LAAF…GVIF), 109–129 (ALIG…ILLV), 133–153 (AIQG…SVES), 168–188 (VGYG…SMMT), 193–213 (FLSW…LGAL), 255–275 (IIAL…FALN), 287–307 (LFLN…PCFA), 318–337 (VYIT…FMAL), 341–363 (SIFW…VVCV), 387–407 (VASV…ITYF), and 411–431 (WHSV…TALL).

It belongs to the major facilitator superfamily. Metabolite:H+ Symporter (MHS) family (TC 2.A.1.6) family.

The protein resides in the cell inner membrane. It carries out the reaction shikimate(in) + H(+)(in) = shikimate(out) + H(+)(out). Its function is as follows. Involved in the uptake of shikimate, an intermediate in the aromatic amino acid biosynthetic pathway. This chain is Shikimate transporter, found in Escherichia coli (strain K12).